The primary structure comprises 120 residues: Aspartate 1-decarboxylase (120 aa).

Ser25 (schiff-base intermediate with substrate; via pyruvic acid) is an active-site residue. Residue Ser25 is modified to Pyruvic acid (Ser). A substrate-binding site is contributed by Thr57. The active-site Proton donor is the Tyr58. Residue 73 to 75 (GAA) coordinates substrate.

The protein belongs to the PanD family. As to quaternary structure, heterooctamer of four alpha and four beta subunits. It depends on pyruvate as a cofactor. Is synthesized initially as an inactive proenzyme, which is activated by self-cleavage at a specific serine bond to produce a beta-subunit with a hydroxyl group at its C-terminus and an alpha-subunit with a pyruvoyl group at its N-terminus.

It is found in the cytoplasm. It carries out the reaction L-aspartate + H(+) = beta-alanine + CO2. The protein operates within cofactor biosynthesis; (R)-pantothenate biosynthesis; beta-alanine from L-aspartate: step 1/1. Catalyzes the pyruvoyl-dependent decarboxylation of aspartate to produce beta-alanine. The chain is Aspartate 1-decarboxylase from Coprothermobacter proteolyticus (strain ATCC 35245 / DSM 5265 / OCM 4 / BT).